Reading from the N-terminus, the 197-residue chain is MRFALELLAIVVFFVVYKLDGIYSATAALIIMVLLNVFYHWFKHRHVPSMMWITLILVMLFGGATLIFHDPLFIKWKPSILQWVLASGFLASHLIGKRVLVARMLDNQISMPSLHWRRLNAAWVLFLLFSGALNLYVAYTFSEEIWVSFKLFGLMGLTILFLIGQAFYMSRHGSEVRVEERKEGMIEAEETVENRPE.

5 helical membrane passes run 22-42 (IYSA…YHWF), 48-68 (PSMM…TLIF), 76-96 (WKPS…HLIG), 121-141 (AAWV…AYTF), and 144-164 (EIWV…FLIG).

It belongs to the YciB family.

The protein resides in the cell inner membrane. Plays a role in cell envelope biogenesis, maintenance of cell envelope integrity and membrane homeostasis. This Magnetococcus marinus (strain ATCC BAA-1437 / JCM 17883 / MC-1) protein is Inner membrane-spanning protein YciB.